A 178-amino-acid chain; its full sequence is FMN reductase (NADH) RutF (178 aa).

It belongs to the non-flavoprotein flavin reductase family. RutF subfamily.

It catalyses the reaction FMNH2 + NAD(+) = FMN + NADH + 2 H(+). Functionally, catalyzes the reduction of FMN to FMNH2 which is used to reduce pyrimidine by RutA via the Rut pathway. The polypeptide is FMN reductase (NADH) RutF (Pseudomonas syringae pv. syringae (strain B728a)).